The sequence spans 1365 residues: Patatin-like phospholipase domain-containing protein 6 (1365 aa).

The Lumenal portion of the chain corresponds to 1–50 (MGTSSHGLATNSSGAKVAERDGFQDVPAPGEGAAGRICGAQPVPFVPQVL). Residue Asn-11 is glycosylated (N-linked (GlcNAc...) asparagine). Residues 51 to 71 (GVMIGAGVAVVVTAVLILLVV) form a helical membrane-spanning segment. Residues 72-1365 (RRLRVPKTPA…QEPPGSATDA (1294 aa)) are Cytoplasmic-facing. 186–313 (VLGHFEKPLF…VRVVQIIMVR (128 aa)) serves as a coordination point for a nucleoside 3',5'-cyclic phosphate. Disordered regions lie at residues 343 to 427 (FPSP…RSDF) and 441 to 463 (QEGASGGSLAAPARTPTQEPREQ). Ser-345 bears the Phosphoserine mark. The span at 350-367 (TRTSPVRGSKRMVSTSAT) shows a compositional bias: polar residues. Thr-352 is modified (phosphothreonine). Ser-353 and Ser-363 each carry phosphoserine. Residues 375–389 (GRPPDPTGAPLPGPT) are compositionally biased toward pro residues. Position 411 is a phosphoserine (Ser-411). Thr-455 carries the post-translational modification Phosphothreonine. A nucleoside 3',5'-cyclic phosphate contacts are provided by residues 502–624 (ELAK…VAAR) and 620–740 (TVAA…LSQK). The PNPLA domain occupies 971–1137 (LVLGGGGARG…INNLPADIAR (167 aa)). The GXGXXG motif lies at 975–980 (GGGARG). A GXSXG motif is present at residues 1002 to 1006 (GTSIG). Catalysis depends on Ser-1004, which acts as the Nucleophile. Asp-1124 functions as the Proton acceptor in the catalytic mechanism. Residues 1124–1126 (DGG) carry the DGA/G motif. The interval 1296–1365 (SYVSDGCADG…QEPPGSATDA (70 aa)) is disordered. Positions 1303-1319 (ADGEESDCLTEYEEDAG) are enriched in acidic residues.

This sequence belongs to the NTE family. Post-translationally, glycosylated.

It localises to the endoplasmic reticulum membrane. The catalysed reaction is a 1-acyl-sn-glycero-3-phosphocholine + H2O = sn-glycerol 3-phosphocholine + a fatty acid + H(+). It carries out the reaction 1-hexadecanoyl-sn-glycero-3-phosphocholine + H2O = sn-glycerol 3-phosphocholine + hexadecanoate + H(+). The enzyme catalyses 1-(9Z-octadecenoyl)-sn-glycero-3-phosphocholine + H2O = sn-glycerol 3-phosphocholine + (9Z)-octadecenoate + H(+). It catalyses the reaction 1-hexadecanoylglycerol + H2O = glycerol + hexadecanoate + H(+). The catalysed reaction is 2-hexadecanoylglycerol + H2O = glycerol + hexadecanoate + H(+). It carries out the reaction 1-(9Z-octadecenoyl)-glycerol + H2O = glycerol + (9Z)-octadecenoate + H(+). The enzyme catalyses 2-(9Z-octadecenoyl)-glycerol + H2O = glycerol + (9Z)-octadecenoate + H(+). It catalyses the reaction 2-(5Z,8Z,11Z,14Z-eicosatetraenoyl)-glycerol + H2O = glycerol + (5Z,8Z,11Z,14Z)-eicosatetraenoate + H(+). The catalysed reaction is 1-hexadecanoyl-sn-glycero-3-phosphate + H2O = sn-glycerol 3-phosphate + hexadecanoate + H(+). Its activity is regulated as follows. Inhibited by a series a OPs such as mipafox (MPX), phenyl saligenin phosphate (PSP), phenyl dipentyl phosphinate (PDPP), diisopropyl fluorophosphate and paraoxon. Functionally, phospholipase B that deacylates intracellular phosphatidylcholine (PtdCho), generating glycerophosphocholine (GroPtdCho). This deacylation occurs at both sn-2 and sn-1 positions of PtdCho. Catalyzes the hydrolysis of several naturally occurring membrane-associated lipids. Hydrolyzes lysophospholipids and monoacylglycerols, preferring the 1-acyl to the 2-acyl isomer. Does not catalyze hydrolysis of di- or triacylglycerols or fatty acid amides. This is Patatin-like phospholipase domain-containing protein 6 (PNPLA6) from Pongo abelii (Sumatran orangutan).